A 257-amino-acid chain; its full sequence is UPF0246 protein Shal_1126 (257 aa).

It belongs to the UPF0246 family.

The polypeptide is UPF0246 protein Shal_1126 (Shewanella halifaxensis (strain HAW-EB4)).